We begin with the raw amino-acid sequence, 518 residues long: Nuclear receptor ROR-gamma (518 aa).

Residues 1 to 30 are modulating; that stretch reads MDRAPQRQHQASRELLAAKKTHTSQIEVIP. 2 consecutive NR C4-type zinc fingers follow at residues 31 to 51 and 67 to 91; these read CKIC…CEGC and CTRQ…LQKC. A DNA-binding region (nuclear receptor) is located at residues 31–96; the sequence is CKICGDKSSG…RLQKCLALGM (66 aa). Disordered regions lie at residues 105 to 183 and 238 to 258; these read RMSK…SGSG and HPGL…SFRS. The span at 109 to 118 shows a compositional bias: basic and acidic residues; the sequence is KQRDSLHAEV. Low complexity predominate over residues 119–130; it reads QKQLQQRQQQQQ. Residues 269–508 form the NR LBD domain; it reads EIEHLVQSVC…PPLYKELFST (240 aa). The short motif at 501–506 is the AF-2 element; sequence LYKELF.

It belongs to the nuclear hormone receptor family. NR1 subfamily. Interacts (via AF-2 motif) with the coactivators NCOA1, NCOA2 and PPARGC1A (via LXXLL motif). Interacts with the corepressor NCOR1. Interacts with CRY1. Interacts (via AF-2 motif) with PROX1. Interacts with FOXP3. Interacts with NR0B2.

It localises to the nucleus. Its function is as follows. Nuclear receptor that binds DNA as a monomer to ROR response elements (RORE) containing a single core motif half-site 5'-AGGTCA-3' preceded by a short A-T-rich sequence. Key regulator of cellular differentiation, immunity, peripheral circadian rhythm as well as lipid, steroid, xenobiotics and glucose metabolism. Considered to have intrinsic transcriptional activity, have some natural ligands like oxysterols that act as agonists (25-hydroxycholesterol) or inverse agonists (7-oxygenated sterols), enhancing or repressing the transcriptional activity, respectively. Recruits distinct combinations of cofactors to target gene regulatory regions to modulate their transcriptional expression, depending on the tissue, time and promoter contexts. Regulates the circadian expression of clock genes such as CRY1, BMAL1 and NR1D1 in peripheral tissues and in a tissue-selective manner. Competes with NR1D1 for binding to their shared DNA response element on some clock genes such as BMAL1, CRY1 and NR1D1 itself, resulting in NR1D1-mediated repression or RORC-mediated activation of the expression, leading to the circadian pattern of clock genes expression. Therefore influences the period length and stability of the clock. Involved in the regulation of the rhythmic expression of genes involved in glucose and lipid metabolism, including PLIN2 and AVPR1A. Negative regulator of adipocyte differentiation through the regulation of early phase genes expression, such as MMP3. Controls adipogenesis as well as adipocyte size and modulates insulin sensitivity in obesity. In liver, has specific and redundant functions with RORA as positive or negative modulator of expression of genes encoding phase I and Phase II proteins involved in the metabolism of lipids, steroids and xenobiotics, such as SULT1E1. Also plays a role in the regulation of hepatocyte glucose metabolism through the regulation of G6PC1 and PCK1. Essential for thymopoiesis and the development of several secondary lymphoid tissues, including lymph nodes and Peyer's patches. Required for the generation of LTi (lymphoid tissue inducer) cells. Regulates thymocyte survival through DNA-binding on ROREs of target gene promoter regions and recruitment of coactivaros via the AF-2. Also plays a key role, downstream of IL6 and TGFB and synergistically with RORA, for lineage specification of uncommitted CD4(+) T-helper (T(H)) cells into T(H)17 cells, antagonizing the T(H)1 program. Probably regulates IL17 and IL17F expression on T(H) by binding to the essential enhancer conserved non-coding sequence 2 (CNS2) in the IL17-IL17F locus. May also play a role in the pre-TCR activation cascade leading to the maturation of alpha/beta T-cells and may participate in the regulation of DNA accessibility in the TCR-J(alpha) locus. Regulates the rhythmic expression of PROX1 and promotes its nuclear localization. Plays an indispensable role in the induction of IFN-gamma dependent anti-mycobacterial systemic immunity. This chain is Nuclear receptor ROR-gamma (RORC), found in Pongo abelii (Sumatran orangutan).